The chain runs to 302 residues: Deoxyribonuclease-1-like 1 (302 aa).

Residues 1-18 (MHYPTALLFLILANGAQA) form the signal peptide. Active-site residues include Glu-97 and His-148. A disulfide bridge links Cys-187 with Cys-224. Asn-261 carries an N-linked (GlcNAc...) asparagine glycan.

Belongs to the DNase I family. In terms of tissue distribution, highest levels in skeletal and cardiac muscles. Detectable in all other tissues tested except brain.

It is found in the endoplasmic reticulum. The protein is Deoxyribonuclease-1-like 1 (DNASE1L1) of Homo sapiens (Human).